The sequence spans 257 residues: ADP-dependent (S)-NAD(P)H-hydrate dehydratase (257 aa).

Residues methionine 1–arginine 257 form the YjeF C-terminal domain. Glycine 200 is an AMP binding site. Aspartate 201 is a binding site for (6S)-NADPHX.

This sequence belongs to the NnrD/CARKD family. As to quaternary structure, homotetramer. The cofactor is Mg(2+).

It carries out the reaction (6S)-NADHX + ADP = AMP + phosphate + NADH + H(+). The enzyme catalyses (6S)-NADPHX + ADP = AMP + phosphate + NADPH + H(+). Functionally, catalyzes the dehydration of the S-form of NAD(P)HX at the expense of ADP, which is converted to AMP. Together with NAD(P)HX epimerase, which catalyzes the epimerization of the S- and R-forms, the enzyme allows the repair of both epimers of NAD(P)HX, a damaged form of NAD(P)H that is a result of enzymatic or heat-dependent hydration. The sequence is that of ADP-dependent (S)-NAD(P)H-hydrate dehydratase from Haloterrigena turkmenica (strain ATCC 51198 / DSM 5511 / JCM 9101 / NCIMB 13204 / VKM B-1734 / 4k) (Halococcus turkmenicus).